Here is a 295-residue protein sequence, read N- to C-terminus: CCAAT-binding factor complex subunit php4 (295 aa).

Residues 1-19 show a composition bias toward low complexity; the sequence is MESSKSPSEVEKSSSASPA. The tract at residues 1-69 is disordered; sequence MESSKSPSEV…GPTSALSVEE (69 aa). Residues 73–111 are a coiled coil; the sequence is RVREKQYQDTIGKLQKENNELLEQLEMLQAQLKNSTLDS. The Nuclear export signal motif lies at 93–100; the sequence is LLEQLEML. The disordered stretch occupies residues 108–130; the sequence is TLDSPKEVEVNSEVVKPDSATTE.

In terms of assembly, component of tha CCAAT-binding complex composed of at least php2, php3, php4 and php5. Interacts with crm1 and grx4.

The protein resides in the cytoplasm. The protein localises to the nucleus. It localises to the cytoskeleton. Its subcellular location is the spindle pole. In terms of biological role, component of the transcription regulatory CCAAT-binding complex. Required for the reprogramming of the cell for iron use. Down-regulates pcl1, sdh4, and isa1 underlow-iron conditions. The polypeptide is CCAAT-binding factor complex subunit php4 (php4) (Schizosaccharomyces pombe (strain 972 / ATCC 24843) (Fission yeast)).